Consider the following 179-residue polypeptide: Large ribosomal subunit protein uL5 (179 aa).

The protein belongs to the universal ribosomal protein uL5 family. Part of the 50S ribosomal subunit; part of the 5S rRNA/L5/L18/L25 subcomplex. Contacts the 5S rRNA and the P site tRNA. Forms a bridge to the 30S subunit in the 70S ribosome.

Functionally, this is one of the proteins that bind and probably mediate the attachment of the 5S RNA into the large ribosomal subunit, where it forms part of the central protuberance. In the 70S ribosome it contacts protein S13 of the 30S subunit (bridge B1b), connecting the 2 subunits; this bridge is implicated in subunit movement. Contacts the P site tRNA; the 5S rRNA and some of its associated proteins might help stabilize positioning of ribosome-bound tRNAs. The chain is Large ribosomal subunit protein uL5 from Neisseria meningitidis serogroup A / serotype 4A (strain DSM 15465 / Z2491).